Reading from the N-terminus, the 240-residue chain is Probable hydroxyacylglutathione hydrolase (240 aa).

6 residues coordinate Zn(2+): histidine 33, histidine 35, aspartate 37, histidine 38, histidine 95, and aspartate 119. Residues arginine 128, 158–160 (HEY), and 234–237 (REEK) each bind substrate. Histidine 158 serves as a coordination point for Zn(2+).

Belongs to the metallo-beta-lactamase superfamily. Glyoxalase II family. Zn(2+) is required as a cofactor.

The enzyme catalyses an S-(2-hydroxyacyl)glutathione + H2O = a 2-hydroxy carboxylate + glutathione + H(+). The protein operates within secondary metabolite metabolism; methylglyoxal degradation; (R)-lactate from methylglyoxal: step 2/2. In terms of biological role, thiolesterase that catalyzes the hydrolysis of S-D-lactoyl-glutathione to form glutathione and D-lactic acid. The polypeptide is Probable hydroxyacylglutathione hydrolase (Schistosoma mansoni (Blood fluke)).